A 338-amino-acid chain; its full sequence is Solute carrier family 35 member G5 (338 aa).

The interval 1-27 is disordered; the sequence is MAGSHPYFNLPDSTHPSPPSAPPSLRW. 9 consecutive transmembrane segments (helical) span residues 37-57, 67-87, 102-122, 160-180, 190-210, 221-241, 250-270, 281-301, and 305-325; these read TNGL…VGPL, LPSL…ALLL, GWAC…YSAV, CGLL…LWTL, TLGY…LLVY, TVAF…LFVL, LLSW…FTCV, LVCA…YYML, and VALS…IITA. The EamA 1 domain occupies 49–174; sequence LPAGFVGPLS…SILGLIIILG (126 aa). Residues 272-325 form the EamA 2 domain; sequence YAVTKAHPALVCAVLHSEVVVALILQYYMLHETVALSDIMGAGVVLGSIAIITA.

It belongs to the SLC35G solute transporter family. Expressed in placenta and testis.

It localises to the membrane. The polypeptide is Solute carrier family 35 member G5 (SLC35G5) (Homo sapiens (Human)).